We begin with the raw amino-acid sequence, 109 residues long: SSKITSILNPADITKALEQCAAGFHHTAFFKASGLSKKSDAELAEIFNVLDGDQSGYIEVEELKNFLKCFSDGARVLNDKETSNFLAAGDSDGDHKIGVDEFKSMAKMT.

S1 is subject to N-acetylserine. EF-hand domains follow at residues 38–73 (KSDA…FSDG) and 77–109 (LNDK…AKMT). Ca(2+)-binding residues include D51, D53, S55, Y57, E59, E62, D90, D92, D94, K96, and E101.

It belongs to the parvalbumin family. In terms of assembly, monomer.

Its function is as follows. In muscle, parvalbumin is thought to be involved in relaxation after contraction. It binds two calcium ions. In Raja clavata (Thornback ray), this protein is Parvalbumin alpha.